The chain runs to 682 residues: Heat shock 70 kDa protein, mitochondrial (682 aa).

The N-terminal 57 residues, 1–57 (MATAALLRSLRRREFATSSISAYRTLASNTKPSWCPSLVGAKWAGLARPFSSKPAGN), are a transit peptide targeting the mitochondrion. The tract at residues 649–682 (GEHMAGGSSGGASGGGGAQGGDQPPEAEYEEVKK) is disordered. Positions 655–668 (GSSGGASGGGGAQG) are enriched in gly residues. Residues 673–682 (PEAEYEEVKK) are compositionally biased toward acidic residues.

The protein belongs to the heat shock protein 70 family.

The protein localises to the mitochondrion. This Solanum tuberosum (Potato) protein is Heat shock 70 kDa protein, mitochondrial (HSP68).